The primary structure comprises 257 residues: Zinc transporter ZupT (257 aa).

8 helical membrane-spanning segments follow: residues 5-25 (LILT…GVLG), 32-52 (LLAF…LMEM), 61-81 (GMSP…YFGL), 109-129 (AILL…ATFV), 137-157 (LGFG…LAVA), 171-191 (ILWA…AWLI), 195-215 (MISP…MVAL), and 236-256 (GVLC…TAGI). 2 residues coordinate Fe(2+): N120 and E123. 2 residues coordinate Zn(2+): E123 and H148. Residues N149, E152, and E181 each coordinate Fe(2+). A Zn(2+)-binding site is contributed by E152.

Belongs to the ZIP transporter (TC 2.A.5) family. ZupT subfamily.

The protein localises to the cell inner membrane. The enzyme catalyses Zn(2+)(in) = Zn(2+)(out). Functionally, mediates zinc uptake. May also transport other divalent cations. In Shigella flexneri serotype 5b (strain 8401), this protein is Zinc transporter ZupT.